Reading from the N-terminus, the 132-residue chain is MRHRHGLRKLNRTSSHRLAMLRNMSNSLLQHELIKTTVPKAKELRKVVEPLITLAKKDTVANRRLAFARLRDRDMVTKLFNELGPRFATRPGGYTRILKFGFRQGDNAPMALVELLDRPEVAEAVEVDGAAE.

It belongs to the bacterial ribosomal protein bL17 family. As to quaternary structure, part of the 50S ribosomal subunit. Contacts protein L32.

The polypeptide is Large ribosomal subunit protein bL17 (Ralstonia pickettii (strain 12J)).